Consider the following 299-residue polypeptide: Phosphatidylserine decarboxylase proenzyme (299 aa).

Catalysis depends on charge relay system; for autoendoproteolytic cleavage activity residues Asp-115, His-171, and Ser-258. Ser-258 (schiff-base intermediate with substrate; via pyruvic acid; for decarboxylase activity) is an active-site residue. Residue Ser-258 is modified to Pyruvic acid (Ser); by autocatalysis.

This sequence belongs to the phosphatidylserine decarboxylase family. PSD-B subfamily. Prokaryotic type II sub-subfamily. In terms of assembly, heterodimer of a large membrane-associated beta subunit and a small pyruvoyl-containing alpha subunit. It depends on pyruvate as a cofactor. Is synthesized initially as an inactive proenzyme. Formation of the active enzyme involves a self-maturation process in which the active site pyruvoyl group is generated from an internal serine residue via an autocatalytic post-translational modification. Two non-identical subunits are generated from the proenzyme in this reaction, and the pyruvate is formed at the N-terminus of the alpha chain, which is derived from the carboxyl end of the proenzyme. The autoendoproteolytic cleavage occurs by a canonical serine protease mechanism, in which the side chain hydroxyl group of the serine supplies its oxygen atom to form the C-terminus of the beta chain, while the remainder of the serine residue undergoes an oxidative deamination to produce ammonia and the pyruvoyl prosthetic group on the alpha chain. During this reaction, the Ser that is part of the protease active site of the proenzyme becomes the pyruvoyl prosthetic group, which constitutes an essential element of the active site of the mature decarboxylase.

It is found in the cell membrane. It catalyses the reaction a 1,2-diacyl-sn-glycero-3-phospho-L-serine + H(+) = a 1,2-diacyl-sn-glycero-3-phosphoethanolamine + CO2. It functions in the pathway phospholipid metabolism; phosphatidylethanolamine biosynthesis; phosphatidylethanolamine from CDP-diacylglycerol: step 2/2. Functionally, catalyzes the formation of phosphatidylethanolamine (PtdEtn) from phosphatidylserine (PtdSer). The chain is Phosphatidylserine decarboxylase proenzyme from Chlamydia caviae (strain ATCC VR-813 / DSM 19441 / 03DC25 / GPIC) (Chlamydophila caviae).